Reading from the N-terminus, the 445-residue chain is Phosphoglucosamine mutase (445 aa).

The active-site Phosphoserine intermediate is the Ser-102. The Mg(2+) site is built by Ser-102, Asp-241, Asp-243, and Asp-245. A Phosphoserine modification is found at Ser-102.

Belongs to the phosphohexose mutase family. It depends on Mg(2+) as a cofactor. In terms of processing, activated by phosphorylation.

The enzyme catalyses alpha-D-glucosamine 1-phosphate = D-glucosamine 6-phosphate. Its function is as follows. Catalyzes the conversion of glucosamine-6-phosphate to glucosamine-1-phosphate. This is Phosphoglucosamine mutase from Aliivibrio salmonicida (strain LFI1238) (Vibrio salmonicida (strain LFI1238)).